The following is a 1046-amino-acid chain: UDP-N-acetylglucosamine--peptide N-acetylglucosaminyltransferase 110 kDa subunit (1046 aa).

N-acetylalanine is present on A2. 2 positions are modified to phosphoserine; by GSK3-beta; alternate: S3 and S4. Residues S3 and S4 are each glycosylated (O-linked (GlcNAc) serine; alternate). An O-linked (GlcNAc) serine glycan is attached at D10. T12 carries O-linked (GlcNAc) threonine glycosylation. An O-linked (GlcNAc) serine glycan is attached at M18. S20 is modified (phosphoserine). One copy of the TPR 1 repeat lies at 21-54; sequence FQGLAELAHREYQAGDFEAAERHCMQLWRQEPDN. Residue E38 is glycosylated (O-linked (GlcNAc) threonine). O-linked (GlcNAc) serine glycans are attached at residues P52 and G56. TPR repeat units lie at residues 89-122, 123-156, 157-190, 191-224, 225-258, 259-292, 293-326, 327-360, 361-394, 395-428, and 429-462; these read AEAY…KPDF, IDGY…NPDL, YCVR…QPNF, AVAW…DPNF, LDAY…SPNH, AVVH…QPHF, PDAY…CPTH, ADSL…FPEF, AAAH…SPTF, ADAY…NPAF, and ADAH…KPDF. Residue S399 is glycosylated (O-linked (GlcNAc) serine; by autocatalysis). Residue T454 is modified to Phosphothreonine; by AMPK. The stretch at 463–473 is one TPR 13; truncated repeat; sequence PDAYCNLAHCL. The DFP motif motif lies at 464–466; sequence DAY. Residues 487–503 carry the Nuclear localization signal motif; that stretch reads KKLVSIVADQLEKNRLP. H508 functions as the Proton acceptor in the catalytic mechanism. UDP is bound by residues Q849, K852, 906 to 908, 911 to 914, 930 to 932, and D935; these read APK, HVRR, and HTT. At Y989 the chain carries Phosphotyrosine. Residues 991 to 1010 form a required for phosphatidylinositol 3,4,5-triphosphate binding region; that stretch reads KKVRGKVWKQRISSPLFNTK.

This sequence belongs to the glycosyltransferase 41 family. O-GlcNAc transferase subfamily. Monomer; may exist in different oligomerization states in cells. Homotrimer, oligomerizes via TPR repeats 6 and 7. Trimerization is not necessary for activity in vitro, however it increases affinity for UDP-GlcNAc. Component of a THAP1/THAP3-HCFC1-OGT complex. Component of the NSL complex at least composed of MOF/KAT8, KANSL1, KANSL2, KANSL3, MCRS1, PHF20, OGT1/OGT, WDR5 and HCFC1. Found in a complex with KIF5B, RHOT1, RHOT2 and TRAK1. Found in a complex composed of at least SINHCAF, SIN3A, HDAC1, SAP30, RBBP4, OGT and TET1. Component of a complex composed of KMT2E/MLL5 (isoform 3), OGT (isoform 1) and USP7; the complex stabilizes KMT2E/MLL5, preventing KMT2E/MLL5 ubiquitination and proteasomal-mediated degradation. Interacts (via TPRs 1-6) with SIN3A; the interaction mediates transcriptional repression in parallel with histone deacetylase. Interacts (via TPR 5-6) with TET1, TET2 and TET3. Interacts (via TPR repeats 6 and 7) with ATXN10. Interacts with NSD2. Interacts with PROSER1; this interaction mediates TET2 O-GlcNAcylation and stability by promoting the interaction between OGT and TET2. In terms of assembly, interacts with USP7. As to quaternary structure, (Microbial infection) Interacts with human T-cell leukemia virus 1/HTLV-1 protein Tax; this interaction increases Tax interacting partner CREB1 O-GlcNAcylation. Ubiquitinated by the SCF(FBXO31) complex, leading to its proteasomal degradation. In terms of processing, phosphorylation on Ser-3 or Ser-4 by GSK3-beta positively regulates its activity. Phosphorylation at Thr-454 by AMPK promotes nuclear localization. Post-translationally, glycosylated via autocatalysis; O-GlcNAcylation at Ser-399 promotes nuclear localization. Glycosylated via autocatalysis; does not affect the enzyme activity but regulates substrate selectivity. As to expression, highly expressed in pancreas and to a lesser extent in skeletal muscle, heart, brain and placenta. Present in trace amounts in lung and liver.

It localises to the nucleus. It is found in the cytoplasm. The protein localises to the mitochondrion. The protein resides in the membrane. Its subcellular location is the cell membrane. It localises to the mitochondrion membrane. It is found in the cell projection. The catalysed reaction is L-seryl-[protein] + UDP-N-acetyl-alpha-D-glucosamine = 3-O-(N-acetyl-beta-D-glucosaminyl)-L-seryl-[protein] + UDP + H(+). It carries out the reaction L-threonyl-[protein] + UDP-N-acetyl-alpha-D-glucosamine = 3-O-(N-acetyl-beta-D-glucosaminyl)-L-threonyl-[protein] + UDP + H(+). Its pathway is protein modification; protein glycosylation. Its activity is regulated as follows. Subject to product inhibition by UDP. Functionally, catalyzes the transfer of a single N-acetylglucosamine from UDP-GlcNAc to a serine or threonine residue in cytoplasmic and nuclear proteins resulting in their modification with a beta-linked N-acetylglucosamine (O-GlcNAc). Glycosylates a large and diverse number of proteins including histone H2B, AKT1, AMPK, ATG4B, CAPRIN1, EZH2, FNIP1, GSDMD, KRT7, LMNA, LMNB1, LMNB2, RPTOR, HOXA1, PFKL, KMT2E/MLL5, MAPT/TAU, TET2, RBL2, RET, NOD2 and HCFC1. Can regulate their cellular processes via cross-talk between glycosylation and phosphorylation or by affecting proteolytic processing. Involved in insulin resistance in muscle and adipocyte cells via glycosylating insulin signaling components and inhibiting the 'Thr-308' phosphorylation of AKT1, enhancing IRS1 phosphorylation and attenuating insulin signaling. Involved in glycolysis regulation by mediating glycosylation of 6-phosphofructokinase PFKL, inhibiting its activity. Plays a key role in chromatin structure by mediating O-GlcNAcylation of 'Ser-112' of histone H2B: recruited to CpG-rich transcription start sites of active genes via its interaction with TET proteins (TET1, TET2 or TET3). As part of the NSL complex indirectly involved in acetylation of nucleosomal histone H4 on several lysine residues. O-GlcNAcylation of 'Ser-75' of EZH2 increases its stability, and facilitating the formation of H3K27me3 by the PRC2/EED-EZH2 complex. Stabilizes KMT2E/MLL5 by mediating its glycosylation, thereby preventing KMT2E/MLL5 ubiquitination. Regulates circadian oscillation of the clock genes and glucose homeostasis in the liver. Stabilizes clock proteins BMAL1 and CLOCK through O-glycosylation, which prevents their ubiquitination and subsequent degradation. Promotes the CLOCK-BMAL1-mediated transcription of genes in the negative loop of the circadian clock such as PER1/2 and CRY1/2. O-glycosylates HCFC1 and regulates its proteolytic processing and transcriptional activity. Component of a THAP1/THAP3-HCFC1-OGT complex that is required for the regulation of the transcriptional activity of RRM1. Regulates mitochondrial motility in neurons by mediating glycosylation of TRAK1. Promotes autophagy by mediating O-glycosylation of ATG4B. Acts as a regulator of mTORC1 signaling by mediating O-glycosylation of RPTOR and FNIP1: O-GlcNAcylation of RPTOR in response to glucose sufficiency promotes activation of the mTORC1 complex. The mitochondrial isoform (mOGT) is cytotoxic and triggers apoptosis in several cell types including INS1, an insulinoma cell line. Its function is as follows. Has N-acetylglucosaminyltransferase activity: glycosylates proteins, such as HNRNPU, NEUROD1, NUP62 and PDCD6IP. Displays specific substrate selectivity compared to other isoforms. This is UDP-N-acetylglucosamine--peptide N-acetylglucosaminyltransferase 110 kDa subunit from Homo sapiens (Human).